A 91-amino-acid chain; its full sequence is Putative transmembrane protein ORF91a (91 aa).

Transmembrane regions (helical) follow at residues 17–37 (TGIS…VGLA), 40–60 (AFLG…LLFM), and 69–89 (GIGF…YIST).

Its subcellular location is the host membrane. The chain is Putative transmembrane protein ORF91a from Acidianus convivator (ABV).